A 462-amino-acid chain; its full sequence is Glutamate--tRNA ligase 2 (462 aa).

The 'HIGH' region signature appears at 8–18 (PSPTGLLHVGG). Positions 227–231 (PLSKR) match the 'KMSKS' region motif. Lys230 contributes to the ATP binding site.

The protein belongs to the class-I aminoacyl-tRNA synthetase family. Glutamate--tRNA ligase type 1 subfamily. In terms of assembly, monomer.

It is found in the cytoplasm. It carries out the reaction tRNA(Glu) + L-glutamate + ATP = L-glutamyl-tRNA(Glu) + AMP + diphosphate. Its function is as follows. Catalyzes the attachment of glutamate to tRNA(Glu) in a two-step reaction: glutamate is first activated by ATP to form Glu-AMP and then transferred to the acceptor end of tRNA(Glu). This is Glutamate--tRNA ligase 2 from Thermosipho melanesiensis (strain DSM 12029 / CIP 104789 / BI429).